Reading from the N-terminus, the 578-residue chain is E3 ubiquitin-protein ligase Praja-1 (578 aa).

Residues 1-298 form a disordered region; sequence MSHQERIASQ…KVPRRRRTMA (298 aa). Composition is skewed to basic and acidic residues over residues 57–67 and 107–116; these read DYSRYPPREYR and KFKDDPEKGA. Positions 151 to 163 are enriched in polar residues; it reads SKQNGSSASQISS. Threonine 231 is subject to Phosphothreonine. 2 stretches are compositionally biased toward basic and acidic residues: residues 243 to 264 and 273 to 290; these read RWRD…RGRG and RYAE…ADKV. Phosphoserine is present on residues serine 317 and serine 319. The tract at residues 332 to 397 is disordered; the sequence is RSREQPQSSS…QASLEEGEIP (66 aa). A compositionally biased stretch (low complexity) spans 359–373; the sequence is AGAGSLASAGSNGSG. Acidic residues predominate over residues 377–395; that stretch reads EVQDPSLQEEEQASLEEGE. An RING-type zinc finger spans residues 530–571; sequence CPICCSEYVKGEVATELPCHHYFHKPCVSIWLQKSGTCPVCR.

Binds ubiquitin-conjugating enzymes (E2s). Binds, in vitro and in vivo, the MAGE conserved domain of MAGED1. Binds weakly Necdin, in vitro. Interacts with UBE2D2. In terms of processing, substrate for E2-dependent ubiquitination. Expressed in brain, liver, kidney. Highest levels in brain where it is found in many regions including cortical and subcortical areas and in neurons of the amygdala. Weak expression also found in testis. Also expressed in developing embryo.

It carries out the reaction S-ubiquitinyl-[E2 ubiquitin-conjugating enzyme]-L-cysteine + [acceptor protein]-L-lysine = [E2 ubiquitin-conjugating enzyme]-L-cysteine + N(6)-ubiquitinyl-[acceptor protein]-L-lysine.. Its function is as follows. Has E2-dependent E3 ubiquitin-protein ligase activity. Ubiquitinates MAGED1 antigen leading to its subsequent degradation by proteasome. May be involved in protein sorting. The chain is E3 ubiquitin-protein ligase Praja-1 (Pja1) from Mus musculus (Mouse).